A 465-amino-acid chain; its full sequence is E3 ubiquitin-protein ligase parkin (465 aa).

The 76-residue stretch at 1–76 folds into the Ubiquitin-like domain; sequence MIVFVRFNSS…VHIVQRPQRK (76 aa). Ser-65 is modified (phosphoserine; by PINK1). The interval 71 to 96 is disordered; the sequence is QRPQRKSHETNASGGDKPQSTPEGSI. The necessary for PINK1-dependent localization to mitochondria stretch occupies residues 77–237; that stretch reads SHETNASGGD…LITNNSRSIP (161 aa). Thr-80 carries the phosphothreonine modification. Residues 80 to 93 are compositionally biased toward polar residues; that stretch reads TNASGGDKPQSTPE. The segment at 141 to 225 adopts an RING-type 0; atypical zinc-finger fold; that stretch reads PTYHSFFVYC…PTSDKDTSVA (85 aa). Thr-175 carries the phosphothreonine; by PINK1 modification. The segment at 204-238 is SYT11 binding 1; that stretch reads TRAEFFFKCGAHPTSDKDTSVALNLITNNSRSIPC. Thr-217 is modified (phosphothreonine). Residues 234–465 are TRIAD supradomain; sequence RSIPCIACTD…ACMGDHWFDV (232 aa). Zn(2+) is bound by residues Cys-238, Cys-241, Cys-253, His-257, Cys-260, Cys-263, Cys-289, Cys-293, Cys-332, and Cys-337. The segment at 238–293 adopts an RING-type 1 zinc-finger fold; the sequence is CIACTDVRNPVLVFQCNHRHVICLDCFHLYCVTRLNDRQFVHDAQLGYSLPCVAGC. Positions 257-293 are SYT11 binding 2; the sequence is HVICLDCFHLYCVTRLNDRQFVHDAQLGYSLPCVAGC. The segment at 313 to 377 adopts an IBR-type zinc-finger fold; that stretch reads NRYQQYGAEE…CKEAYHEGEC (65 aa). Lys-349 participates in a covalent cross-link: Glycyl lysine isopeptide (Lys-Gly) (interchain with G-Cter in ISG15). Zn(2+) contacts are provided by Cys-352, Cys-360, Cys-365, and Cys-368. Lys-369 participates in a covalent cross-link: Glycyl lysine isopeptide (Lys-Gly) (interchain with G-Cter in ISG15). Zn(2+)-binding residues include His-373 and Cys-377. Positions 378 to 410 are REP; that stretch reads DSMFEASGATSQAYRVDQRAAEQARWEEASKET. Positions 418 and 421 each coordinate Zn(2+). An RING-type 2; atypical zinc finger spans residues 418-449; sequence CPRCNVPIEKNGGCMHMKCPQPQCKLEWCWNC. The active site involves Cys-431. Positions 436, 441, 446, 449, 457, and 461 each coordinate Zn(2+).

It belongs to the RBR family. Parkin subfamily. As to quaternary structure, forms an E3 ubiquitin ligase complex with UBE2L3 or UBE2L6. Mediates 'Lys-63'-linked polyubiquitination by associating with UBE2V1. Part of a SCF-like complex, consisting of PRKN, CUL1 and FBXW7. Interacts with SNCAIP. Binds to the C2A and C2B domains of SYT11. Interacts and regulates the turnover of SEPTIN5. Part of a complex, including STUB1, HSP70 and GPR37. The amount of STUB1 in the complex increases during ER stress. STUB1 promotes the dissociation of HSP70 from PRKN and GPR37, thus facilitating PRKN-mediated GPR37 ubiquitination. HSP70 transiently associates with unfolded GPR37 and inhibits the E3 activity of PRKN, whereas, STUB1 enhances the E3 activity of PRKN through promotion of dissociation of HSP70 from PRKN-GPR37 complexes. Interacts with PSMD4 and PACRG. Interacts with LRRK2. Interacts with RANBP2. Interacts with SUMO1 but not SUMO2, which promotes nuclear localization and autoubiquitination. Interacts (via first RING-type domain) with AIMP2 (via N-terminus). Interacts with PSMA7 and RNF41. Interacts with PINK1. Forms a complex with PINK1 and PARK7. Interacts with CHPF, the interaction with isoform 2 may facilitate PRKN transport into the mitochondria. Interacts with MFN2 (phosphorylated), promotes PRKN localization in dysfunctional depolarized mitochondria. Interacts with FBXO7; this promotes translocation to dysfunctional depolarized mitochondria. Interacts with ZNF746. Interacts with heat shock protein 70 family members, including HSPA1L, HSPA1A and HSPA8; interaction HSPA1L promotes translocation to damaged mitochondria. Interacts with BAG4 and, to a lesser extent, BAG5; interaction with BAG4 inhibits translocation to damaged mitochondria. Forms a complex with PRKN and PARK7. Interacts with AMBRA1. Post-translationally, auto-ubiquitinates in an E2-dependent manner leading to its own degradation. Also polyubiquitinated by RNF41 for proteasomal degradation. In terms of processing, S-nitrosylated. Phosphorylated. Activation requires phosphorylation at Ser-65 by PINK1 and binding to PINK1 phosphorylated ubiquitin. Phosphorylation at Thr-175 by PINK1 and at Thr-217 is important for mitochondrial localization. As to expression, largely confined to neuronal elements, including fibers and neuropil. Highly expressed at the forebrain level, in pyramidal cells of layer V, in various cortical regions and cerebellum. Expressed in the nucleus of diagonal band of Broca, nucleus basalis, bed nucleus of the stria terminalis, and olfactory tubercle. Moderate expression is seen in most neurons of the subthalamic nucleus, heart, skeletal muscle and testis. Moderate expression was found in frontal cortex, parietal cortex, cerebellum, heart, skeletal muscle and testis.

The protein localises to the cytoplasm. The protein resides in the cytosol. Its subcellular location is the nucleus. It is found in the endoplasmic reticulum. It localises to the mitochondrion. The protein localises to the mitochondrion outer membrane. The protein resides in the cell projection. Its subcellular location is the neuron projection. It is found in the postsynaptic density. It localises to the presynapse. The catalysed reaction is [E2 ubiquitin-conjugating enzyme]-S-ubiquitinyl-L-cysteine + [acceptor protein]-L-lysine = [E2 ubiquitin-conjugating enzyme]-L-cysteine + [acceptor protein]-N(6)-ubiquitinyl-L-lysine.. Its pathway is protein modification; protein ubiquitination. Its activity is regulated as follows. In the autoinhibited state the side chain of Phe-463 inserts into a hydrophobic groove in RING-0, occluding the ubiquitin acceptor site Cys-431, whereas the REP repressor element binds RING-1 and blocks its E2-binding site. Activation of PRKN requires 2 steps: (1) phosphorylation at Ser-65 by PINK1 and (2) binding to phosphorylated ubiquitin, leading to unlock repression of the catalytic Cys-431 by the RING-0 region via an allosteric mechanism and converting PRKN to its fully-active form. According to another report, phosphorylation at Ser-65 by PINK1 is not essential for activation and only binding to phosphorylated ubiquitin is essential to unlock repression. In addition, ISG15 conjugation positively regulates its ubiquitin E3 ligase activity by suppressing the intramolecular interaction that maintains its autoinhibited conformation. In terms of biological role, functions within a multiprotein E3 ubiquitin ligase complex, catalyzing the covalent attachment of ubiquitin moieties onto substrate proteins. Substrates include SYT11 and VDAC1. Other substrates are BCL2, CCNE1, GPR37, RHOT1/MIRO1, MFN1, MFN2, STUB1, SNCAIP, SEPTIN5, TOMM20, USP30, ZNF746, MIRO1 and AIMP2. Mediates monoubiquitination as well as 'Lys-6', 'Lys-11', 'Lys-48'-linked and 'Lys-63'-linked polyubiquitination of substrates depending on the context. Participates in the removal and/or detoxification of abnormally folded or damaged protein by mediating 'Lys-63'-linked polyubiquitination of misfolded proteins such as PARK7: 'Lys-63'-linked polyubiquitinated misfolded proteins are then recognized by HDAC6, leading to their recruitment to aggresomes, followed by degradation. Mediates 'Lys-63'-linked polyubiquitination of a 22 kDa O-linked glycosylated isoform of SNCAIP, possibly playing a role in Lewy-body formation. Mediates monoubiquitination of BCL2, thereby acting as a positive regulator of autophagy. Protects against mitochondrial dysfunction during cellular stress, by acting downstream of PINK1 to coordinate mitochondrial quality control mechanisms that remove and replace dysfunctional mitochondrial components. Depending on the severity of mitochondrial damage and/or dysfunction, activity ranges from preventing apoptosis and stimulating mitochondrial biogenesis to regulating mitochondrial dynamics and eliminating severely damaged mitochondria via mitophagy. Activation and recruitment onto the outer membrane of damaged/dysfunctional mitochondria (OMM) requires PINK1-mediated phosphorylation of both PRKN and ubiquitin. After mitochondrial damage, functions with PINK1 to mediate the decision between mitophagy or preventing apoptosis by inducing either the poly- or monoubiquitination of VDAC1, respectively; polyubiquitination of VDAC1 promotes mitophagy, while monoubiquitination of VDAC1 decreases mitochondrial calcium influx which ultimately inhibits apoptosis. When cellular stress results in irreversible mitochondrial damage, promotes the autophagic degradation of dysfunctional depolarized mitochondria (mitophagy) by promoting the ubiquitination of mitochondrial proteins such as TOMM20, RHOT1/MIRO1, MFN1 and USP30. Preferentially assembles 'Lys-6'-, 'Lys-11'- and 'Lys-63'-linked polyubiquitin chains, leading to mitophagy. The PINK1-PRKN pathway also promotes fission of damaged mitochondria by PINK1-mediated phosphorylation which promotes the PRKN-dependent degradation of mitochondrial proteins involved in fission such as MFN2. This prevents the refusion of unhealthy mitochondria with the mitochondrial network or initiates mitochondrial fragmentation facilitating their later engulfment by autophagosomes. Regulates motility of damaged mitochondria via the ubiquitination and subsequent degradation of MIRO1 and MIRO2; in motor neurons, this likely inhibits mitochondrial intracellular anterograde transport along the axons which probably increases the chance of the mitochondria undergoing mitophagy in the soma. Involved in mitochondrial biogenesis via the 'Lys-48'-linked polyubiquitination of transcriptional repressor ZNF746/PARIS which leads to its subsequent proteasomal degradation and allows activation of the transcription factor PPARGC1A. Limits the production of reactive oxygen species (ROS). Regulates cyclin-E during neuronal apoptosis. In collaboration with CHPF isoform 2, may enhance cell viability and protect cells from oxidative stress. Independently of its ubiquitin ligase activity, protects from apoptosis by the transcriptional repression of p53/TP53. May protect neurons against alpha synuclein toxicity, proteasomal dysfunction, GPR37 accumulation, and kainate-induced excitotoxicity. May play a role in controlling neurotransmitter trafficking at the presynaptic terminal and in calcium-dependent exocytosis. May represent a tumor suppressor gene. This chain is E3 ubiquitin-protein ligase parkin, found in Rattus norvegicus (Rat).